We begin with the raw amino-acid sequence, 129 residues long: Transcription antitermination protein NusB (129 aa).

Belongs to the NusB family.

Functionally, involved in transcription antitermination. Required for transcription of ribosomal RNA (rRNA) genes. Binds specifically to the boxA antiterminator sequence of the ribosomal RNA (rrn) operons. This chain is Transcription antitermination protein NusB, found in Staphylococcus aureus (strain bovine RF122 / ET3-1).